The chain runs to 348 residues: Inactive rhomboid-related protein 2 (348 aa).

The EF-hand domain maps to 14 to 49 (IEASSWIRIFRAFDTDHDGLIQCEEMQKTIRDSTYS). Ca(2+) contacts are provided by Asp-27, Asp-29, Asp-31, and Glu-38. A run of 7 helical transmembrane segments spans residues 121–141 (PPIFLIFLSIVQLAFYLYYVV), 177–197 (LINVGIFHIIFNILIQLAIGV), 207–227 (IYILYFMGVLFGSILSLALDP), 229–249 (VFLCGGAAGSFSLIASHITTI), 263–283 (LPILIVFAALDYVLAVYQRFF), 290–310 (VSMYGHLGGLVAGILFTFILF), and 323–343 (FWVSLVLSGFFIAICITLIAA).

It belongs to the peptidase S54 family.

Its subcellular location is the membrane. Functionally, probable inactive serine protease. The sequence is that of Inactive rhomboid-related protein 2 from Caenorhabditis elegans.